The primary structure comprises 464 residues: Pup--protein ligase (464 aa).

Glu14 is a Mg(2+) binding site. Arg58 is an ATP binding site. Tyr60 contacts Mg(2+). Asp62 serves as the catalytic Proton acceptor. Glu68 is a Mg(2+) binding site. The ATP site is built by Thr71 and Trp430.

The protein belongs to the Pup ligase/Pup deamidase family. Pup-conjugating enzyme subfamily.

It catalyses the reaction ATP + [prokaryotic ubiquitin-like protein]-L-glutamate + [protein]-L-lysine = ADP + phosphate + N(6)-([prokaryotic ubiquitin-like protein]-gamma-L-glutamyl)-[protein]-L-lysine.. It functions in the pathway protein degradation; proteasomal Pup-dependent pathway. It participates in protein modification; protein pupylation. Catalyzes the covalent attachment of the prokaryotic ubiquitin-like protein modifier Pup to the proteasomal substrate proteins, thereby targeting them for proteasomal degradation. This tagging system is termed pupylation. The ligation reaction involves the side-chain carboxylate of the C-terminal glutamate of Pup and the side-chain amino group of a substrate lysine. The protein is Pup--protein ligase of Micrococcus luteus (strain ATCC 4698 / DSM 20030 / JCM 1464 / CCM 169 / CCUG 5858 / IAM 1056 / NBRC 3333 / NCIMB 9278 / NCTC 2665 / VKM Ac-2230) (Micrococcus lysodeikticus).